Consider the following 288-residue polypeptide: Bifunctional protein FolD (288 aa).

Residues 166-168 (GAS) and I232 contribute to the NADP(+) site.

Belongs to the tetrahydrofolate dehydrogenase/cyclohydrolase family. In terms of assembly, homodimer.

It catalyses the reaction (6R)-5,10-methylene-5,6,7,8-tetrahydrofolate + NADP(+) = (6R)-5,10-methenyltetrahydrofolate + NADPH. The catalysed reaction is (6R)-5,10-methenyltetrahydrofolate + H2O = (6R)-10-formyltetrahydrofolate + H(+). The protein operates within one-carbon metabolism; tetrahydrofolate interconversion. Catalyzes the oxidation of 5,10-methylenetetrahydrofolate to 5,10-methenyltetrahydrofolate and then the hydrolysis of 5,10-methenyltetrahydrofolate to 10-formyltetrahydrofolate. The sequence is that of Bifunctional protein FolD from Shigella dysenteriae serotype 1 (strain Sd197).